The primary structure comprises 637 residues: Phospholipase B (637 aa).

The first 19 residues, 1–19, serve as a signal peptide directing secretion; sequence MSIITTAFALSLLATTAFA. The 527-residue stretch at 46–572 folds into the PLA2c domain; that stretch reads DCPSNVTWIR…DTWCWAGDDN (527 aa). N50, N56, N122, N231, N246, N272, N314, N343, N387, N433, N481, N501, N528, N553, N572, N594, and N606 each carry an N-linked (GlcNAc...) asparagine glycan.

This sequence belongs to the lysophospholipase family. N-glycosylated.

It is found in the secreted. The enzyme catalyses a 1-acyl-sn-glycero-3-phosphocholine + H2O = sn-glycerol 3-phosphocholine + a fatty acid + H(+). In terms of biological role, exhibits phospholipase B (PLB), lysophospholipase (LPL) and lysophospholipase/transacylase (LPTA) activities. This Cryptococcus neoformans var. neoformans serotype D (strain B-3501A) (Filobasidiella neoformans) protein is Phospholipase B (PLB1).